A 74-amino-acid polypeptide reads, in one-letter code: Protein SlyX homolog (74 aa).

Belongs to the SlyX family.

This chain is Protein SlyX homolog, found in Aliivibrio salmonicida (strain LFI1238) (Vibrio salmonicida (strain LFI1238)).